The primary structure comprises 284 residues: Shikimate dehydrogenase (NADP(+)) (284 aa).

Shikimate contacts are provided by residues 23–25 (SLS) and Thr-70. The active-site Proton acceptor is Lys-74. Glu-86 is an NADP(+) binding site. Asn-95 and Asp-111 together coordinate shikimate. NADP(+)-binding positions include 135–139 (GAGGA), 159–164 (NRTPGR), and Ala-227. A shikimate-binding site is contributed by Tyr-229. Gly-251 serves as a coordination point for NADP(+).

It belongs to the shikimate dehydrogenase family. As to quaternary structure, homodimer.

It carries out the reaction shikimate + NADP(+) = 3-dehydroshikimate + NADPH + H(+). It functions in the pathway metabolic intermediate biosynthesis; chorismate biosynthesis; chorismate from D-erythrose 4-phosphate and phosphoenolpyruvate: step 4/7. Involved in the biosynthesis of the chorismate, which leads to the biosynthesis of aromatic amino acids. Catalyzes the reversible NADPH linked reduction of 3-dehydroshikimate (DHSA) to yield shikimate (SA). In Rubrobacter xylanophilus (strain DSM 9941 / JCM 11954 / NBRC 16129 / PRD-1), this protein is Shikimate dehydrogenase (NADP(+)).